Here is an 865-residue protein sequence, read N- to C-terminus: Valine--tRNA ligase (865 aa).

Residues 43–53 (PNITGRIHMGH) carry the 'HIGH' region motif. The short motif at 523 to 527 (KMSKS) is the 'KMSKS' region element. Residue K526 participates in ATP binding. The stretch at 797 to 865 (GLIDFEKEKE…RLESILRDLE (69 aa)) forms a coiled coil.

The protein belongs to the class-I aminoacyl-tRNA synthetase family. ValS type 1 subfamily. Monomer.

The protein localises to the cytoplasm. It catalyses the reaction tRNA(Val) + L-valine + ATP = L-valyl-tRNA(Val) + AMP + diphosphate. In terms of biological role, catalyzes the attachment of valine to tRNA(Val). As ValRS can inadvertently accommodate and process structurally similar amino acids such as threonine, to avoid such errors, it has a 'posttransfer' editing activity that hydrolyzes mischarged Thr-tRNA(Val) in a tRNA-dependent manner. The protein is Valine--tRNA ligase of Thermotoga maritima (strain ATCC 43589 / DSM 3109 / JCM 10099 / NBRC 100826 / MSB8).